Reading from the N-terminus, the 387-residue chain is Putative acid--amine ligase YjfC (387 aa).

An ATP-binding site is contributed by 101–103 (RMD). The Mg(2+) site is built by aspartate 103, glutamate 116, and asparagine 118. Residues lysine 265, lysine 302, glycine 309, glutamine 337, and 372-374 (LIT) contribute to the ATP site.

It belongs to the glutathionylspermidine synthase preATP-grasp family.

Functionally, may be a ligase forming an amide bond. Shows ATPase activity. Despite its similarity to the C-terminal synthetase domain of Gss, is not a glutathionylspermidine (Gsp) synthetase. Cannot synthesize Gsp, glutathione (GSH), or GSH intermediates, from GSH and spermidine, cysteine and glutamate, gamma-glutamylcysteine and spermidine, and gamma-glutamylcysteine and glycine. Does not bind to Gsp. This is Putative acid--amine ligase YjfC (yjfC) from Escherichia coli (strain K12).